A 196-amino-acid polypeptide reads, in one-letter code: Potassium-transporting ATPase KdpC subunit (196 aa).

Residues 17–37 (LLLLVATAGLGLVYPLAVFAV) form a helical membrane-spanning segment. Residues 73–93 (QPRPSAAGDGYDPTASGASNL) are disordered.

Belongs to the KdpC family. The system is composed of three essential subunits: KdpA, KdpB and KdpC.

The protein resides in the cell membrane. Functionally, part of the high-affinity ATP-driven potassium transport (or Kdp) system, which catalyzes the hydrolysis of ATP coupled with the electrogenic transport of potassium into the cytoplasm. This subunit acts as a catalytic chaperone that increases the ATP-binding affinity of the ATP-hydrolyzing subunit KdpB by the formation of a transient KdpB/KdpC/ATP ternary complex. This chain is Potassium-transporting ATPase KdpC subunit, found in Kineococcus radiotolerans (strain ATCC BAA-149 / DSM 14245 / SRS30216).